A 104-amino-acid chain; its full sequence is Replication restart protein PriB (104 aa).

The SSB domain occupies 1-101 (MTNRLELSGV…LHADHIEIIC (101 aa)).

Belongs to the PriB family. Homodimer. Interacts with PriA and DnaT. Component of the replication restart primosome. Primosome assembly occurs via a 'hand-off' mechanism. PriA binds to replication forks, subsequently PriB then DnaT bind; DnaT then displaces ssDNA to generate the helicase loading substrate.

In terms of biological role, involved in the restart of stalled replication forks, which reloads the replicative helicase on sites other than the origin of replication; the PriA-PriB pathway is the major replication restart pathway. During primosome assembly it facilitates complex formation between PriA and DnaT on DNA; stabilizes PriA on DNA. Stimulates the DNA unwinding activity of PriA helicase. The chain is Replication restart protein PriB from Photobacterium profundum (strain SS9).